The chain runs to 1216 residues: 1-phosphatidylinositol 4,5-bisphosphate phosphodiesterase beta-1 (1216 aa).

Residue C17 is the site of S-palmitoyl cysteine attachment. S236 carries the post-translational modification Phosphoserine. Positions 316–467 (EDMSQPLSHY…LMYKILVKNK (152 aa)) constitute a PI-PLC X-box domain. Residues H331 and H378 contribute to the active site. The residue at position 417 (S417) is a Phosphoserine. The interval 469–534 (KSHKSSEGSG…MDEGTAGSEA (66 aa)) is disordered. Positions 472–483 (KSSEGSGKKKLS) are enriched in basic and acidic residues. The segment covering 491–501 (SDSSSVFEPSS) has biased composition (low complexity). The segment covering 507–518 (ADTESDDDDDDD) has biased composition (acidic residues). At T509 the chain carries Phosphothreonine. S511 and S582 each carry phosphoserine. A PI-PLC Y-box domain is found at 540–656 (MSNLVNYIQP…GYRLKPEFMR (117 aa)). Residues 656-784 (RRPDKHFDPF…CLRNERNQPL (129 aa)) enclose the C2 domain. Disordered stretches follow at residues 834-891 (DEEE…VKAP), 933-993 (LVKR…IEQD), 1071-1095 (KMDKKRQEKITEAKSKDKSQMEEEK), and 1172-1216 (KISE…DTPL). S887 carries the post-translational modification Phosphoserine; by PKC. Basic and acidic residues-rich tracts occupy residues 941-951 (TTDLIKEHTTK) and 959-979 (YLRRRAALEKTAKKDNKKKSE). Phosphoserine occurs at positions 978 and 987. The span at 980–991 (PSSPDHVSSTIE) shows a compositional bias: polar residues. Basic and acidic residues predominate over residues 1075–1095 (KRQEKITEAKSKDKSQMEEEK). The span at 1187–1198 (TSDSGKLNQKPP) shows a compositional bias: polar residues. Residues S1199 and S1200 each carry the phosphoserine modification. Residues 1207-1216 (NPGKEFDTPL) are compositionally biased toward basic and acidic residues.

Interacts with DGKQ. Ca(2+) serves as cofactor. Post-translationally, palmitoylated. Palmitoylation at Cys-17 by ZDHHC21 regulates the signaling activity of PLCB1 and the function of the endothelial barrier. Palmitoylation by ZDHHC21 is stimulated by inflammation.

The protein localises to the nucleus membrane. It localises to the cytoplasm. The catalysed reaction is a 1,2-diacyl-sn-glycero-3-phospho-(1D-myo-inositol-4,5-bisphosphate) + H2O = 1D-myo-inositol 1,4,5-trisphosphate + a 1,2-diacyl-sn-glycerol + H(+). It carries out the reaction a 1,2-diacyl-sn-glycero-3-phospho-(1D-myo-inositol) + H2O = 1D-myo-inositol 1-phosphate + a 1,2-diacyl-sn-glycerol + H(+). Functionally, catalyzes the hydrolysis of 1-phosphatidylinositol 4,5-bisphosphate into diacylglycerol (DAG) and inositol 1,4,5-trisphosphate (IP3) and mediates intracellular signaling downstream of G protein-coupled receptors. Regulates the function of the endothelial barrier. The polypeptide is 1-phosphatidylinositol 4,5-bisphosphate phosphodiesterase beta-1 (PLCB1) (Bos taurus (Bovine)).